Consider the following 270-residue polypeptide: Gap junction beta-3 protein (270 aa).

Topologically, residues 1-20 (MDWKKLQDLLSGVNQYSTAF) are cytoplasmic. The helical transmembrane segment at 21–40 (GRIWLSVVFVFRVLVYVVAA) threads the bilayer. Over 41–75 (ERVWGDEQKDFDCNTRQPGCTNVCYDNFFPISNIR) the chain is Extracellular. The helical transmembrane segment at 76 to 98 (LWALQLIFVTCPSMLVILHVAYR) threads the bilayer. Over 99–126 (EERERKHRQKHGEQCAKLYSHPGKKHGG) the chain is Cytoplasmic. Residues 127–149 (LWWTYLFSLIFKLIIELVFLYVL) form a helical membrane-spanning segment. Residues 150–188 (HTLWHGFTMPRLVQCASIVPCPNTVDCYIARPTEKKVFT) are Extracellular-facing. A helical transmembrane segment spans residues 189–211 (YFMVGASAVCIILTICEICYLIF). Over 212-270 (HRIMRGISKGKSTKSISSPKSSSRASTCRCHHKLLESGDPEADPASEKLQASAPSLTPI) the chain is Cytoplasmic. The segment at 246-270 (LESGDPEADPASEKLQASAPSLTPI) is disordered.

This sequence belongs to the connexin family. Beta-type (group I) subfamily. In terms of assembly, a connexon is composed of a hexamer of connexins. Interacts with CNST.

The protein resides in the cell membrane. It is found in the cell junction. The protein localises to the gap junction. In terms of biological role, one gap junction consists of a cluster of closely packed pairs of transmembrane channels, the connexons, through which materials of low MW diffuse from one cell to a neighboring cell. The sequence is that of Gap junction beta-3 protein (Gjb3) from Mus musculus (Mouse).